An 855-amino-acid chain; its full sequence is Oxysterol-binding protein-related protein 3 (855 aa).

The tract at residues 1 to 32 (MSDEKNLGVSQKLVSPSRSTSSCSSKQGSRQD) is disordered. Phosphoserine occurs at positions 15 and 33. Low complexity predominate over residues 15 to 31 (SPSRSTSSCSSKQGSRQ). Positions 50 to 145 (PPVQKGFLLK…WVSKLRHHRM (96 aa)) constitute a PH domain. Positions 161-167 (FFSGSSV) match the FFAT 1 motif. Phosphoserine occurs at positions 199, 250, 272, 277, 288, 291, 340, 393, 405, and 408. Residues 274–293 (PNLSTLDFGEEKSYSDGSEA) are disordered. A disordered region spans residues 377–396 (DPPAVPKPGDNLAEENSRDE). An FFAT 2 motif is present at residues 450–454 (LSLDN). Residues 468–490 (PVLESSGEARSKRRTSLPAPGPN) are disordered.

Belongs to the OSBP family. Homodimer. Interacts with RRAS. Interacts (phosphorylated form) with VAPA. Interacts with OSBPL6. Post-translationally, phosphorylation is enhanced in vitro by phorbol-12-myristate-13-acetate (PMA), forskolin and calcium ionophore A23187. Phosphorylation seems to be stimulated in conditions of low cell-cell (or cell-matrix) adhesion. As to expression, expressed in spinal ganglia. Expressed in a subset of small lymphocytes (at protein level).

The protein resides in the endoplasmic reticulum membrane. It is found in the cytoplasm. Its subcellular location is the cytosol. The protein localises to the cell membrane. It localises to the cell projection. The protein resides in the filopodium tip. It is found in the nucleus membrane. Phosphoinositide-binding protein which associates with both cell and endoplasmic reticulum (ER) membranes. Can bind to the ER membrane protein VAPA and recruit VAPA to plasma membrane sites, thus linking these intracellular compartments. The ORP3-VAPA complex stimulates RRAS signaling which in turn attenuates integrin beta-1 (ITGB1) activation at the cell surface. With VAPA, may regulate ER morphology. Has a role in regulation of the actin cytoskeleton, cell polarity and cell adhesion. Binds to phosphoinositides with preference for PI(3,4)P2 and PI(3,4,5)P3. Also binds 25-hydroxycholesterol and cholesterol. This Mus musculus (Mouse) protein is Oxysterol-binding protein-related protein 3 (Osbpl3).